The chain runs to 58 residues: Large ribosomal subunit protein uL30 (58 aa).

The protein belongs to the universal ribosomal protein uL30 family. Part of the 50S ribosomal subunit.

In Acinetobacter baylyi (strain ATCC 33305 / BD413 / ADP1), this protein is Large ribosomal subunit protein uL30.